A 62-amino-acid polypeptide reads, in one-letter code: Large ribosomal subunit protein uL30 (62 aa).

Belongs to the universal ribosomal protein uL30 family. In terms of assembly, part of the 50S ribosomal subunit.

The protein is Large ribosomal subunit protein uL30 of Polynucleobacter asymbioticus (strain DSM 18221 / CIP 109841 / QLW-P1DMWA-1) (Polynucleobacter necessarius subsp. asymbioticus).